The following is a 221-amino-acid chain: Transcription antitermination protein NusB (221 aa).

This sequence belongs to the NusB family.

Its function is as follows. Involved in transcription antitermination. Required for transcription of ribosomal RNA (rRNA) genes. Binds specifically to the boxA antiterminator sequence of the ribosomal RNA (rrn) operons. In Synechocystis sp. (strain ATCC 27184 / PCC 6803 / Kazusa), this protein is Transcription antitermination protein NusB.